The primary structure comprises 281 residues: MKIPFTKYQGLGNDFILIDNRHSPEPLITAEMAVAMCDRHFGIGADGVIFALPGQAETDYTMRIFNSDGSEPEMCGNGIRCLAQFIARLEANNAIGRTYRIHTLAGTIIPRLEANEQVTVDMGPPQLLGSEIPTTLVKGSEKVLAVPLEVEGKDWLVTCVSMGNPHCVTFVGDLASIPLETIGPKFEHHPVFPQRTNVEFVEVIAPDYMKMRVWERGAGITLACGTGACAVVVAALLTGKCDRRCTVELPGGCLQIHWSQTDNRVYMTGPAKAVFEGIYPI.

Residues Asn13 and Asn66 each contribute to the substrate site. The active-site Proton donor is Cys75. Substrate contacts are provided by residues 76-77, Asn164, Asn197, and 215-216; these read GN and ER. Catalysis depends on Cys224, which acts as the Proton acceptor. Substrate is bound at residue 225 to 226; that stretch reads GT.

It belongs to the diaminopimelate epimerase family. As to quaternary structure, homodimer.

It is found in the cytoplasm. The catalysed reaction is (2S,6S)-2,6-diaminopimelate = meso-2,6-diaminopimelate. The protein operates within amino-acid biosynthesis; L-lysine biosynthesis via DAP pathway; DL-2,6-diaminopimelate from LL-2,6-diaminopimelate: step 1/1. Its function is as follows. Catalyzes the stereoinversion of LL-2,6-diaminopimelate (L,L-DAP) to meso-diaminopimelate (meso-DAP), a precursor of L-lysine and an essential component of the bacterial peptidoglycan. This is Diaminopimelate epimerase from Microcystis aeruginosa (strain NIES-843 / IAM M-2473).